We begin with the raw amino-acid sequence, 1038 residues long: Translation initiation factor IF-2 (1038 aa).

Residues 48-426 form a disordered region; sequence DALQGPGGNA…RQRRQEYEAM (379 aa). The span at 58–87 shows a compositional bias: low complexity; the sequence is GKSAAKPGAPRKAAPAKPAAPSPAAAARPA. Positions 88 to 99 are enriched in pro residues; it reads APKPGAPAPKPA. A compositionally biased stretch (low complexity) spans 100–114; sequence EAPSSTPAAPSAPSA. Residues 115–125 show a composition bias toward pro residues; the sequence is GPRPGPKPAPK. Positions 126-141 are enriched in low complexity; sequence AAPVTPVPAAEFSAPA. A compositionally biased stretch (pro residues) spans 142–153; the sequence is PAQPAAPQPQAP. The segment covering 177–199 has biased composition (basic and acidic residues); that stretch reads DGGRDGGQRDGGRGGERGGDRPA. The segment covering 200–219 has biased composition (low complexity); it reads RPAGQGAPRPGGARPAGPRP. Residues 261-277 show a composition bias toward gly residues; that stretch reads SGPGGAPRPQGGQGQGG. The span at 299-315 shows a compositional bias: low complexity; that stretch reads GNRPNPGMMPQRPAAGP. The segment covering 319 to 406 has biased composition (gly residues); it reads PGGGGRGPGG…GTQGAFGRPG (88 aa). The segment covering 410-419 has biased composition (basic residues); the sequence is RRGRKSKRQR. The region spanning 531-703 is the tr-type G domain; sequence SRPPVVTVMG…VVLTADASLD (173 aa). Positions 540 to 547 are G1; sequence GHVDHGKT. Position 540–547 (540–547) interacts with GTP; sequence GHVDHGKT. The tract at residues 565-569 is G2; the sequence is GITQH. Positions 590–593 are G3; it reads DTPG. GTP-binding positions include 590–594 and 644–647; these read DTPGH and NKID. The interval 644–647 is G4; it reads NKID. Residues 680 to 682 are G5; it reads SAK.

Belongs to the TRAFAC class translation factor GTPase superfamily. Classic translation factor GTPase family. IF-2 subfamily.

The protein resides in the cytoplasm. Functionally, one of the essential components for the initiation of protein synthesis. Protects formylmethionyl-tRNA from spontaneous hydrolysis and promotes its binding to the 30S ribosomal subunits. Also involved in the hydrolysis of GTP during the formation of the 70S ribosomal complex. The polypeptide is Translation initiation factor IF-2 (Streptomyces griseus subsp. griseus (strain JCM 4626 / CBS 651.72 / NBRC 13350 / KCC S-0626 / ISP 5235)).